A 570-amino-acid chain; its full sequence is MSEKHPGPLVVEGKLSDAERMKLESNYLRGTIAEDLNDGLTGGFKGDNFLLIRFHGMYQQDDRDIRAERAAQKLEPRHAMLLRCRLPGGVITTTQWQAIDKFAADNTIYGSIRLTNRQTFQFHGILKKNVKPVHQMLHSVGLDALATANDMNRNVLCTSNPYESQLHAEAYEWAKKISEHLLPRTRAYAEIWLDQEKVATTDEEPILGQTYLPRKFKTTVVIPPQNDIDLHANDMNFVAIAENGKLVGFNLLVGGGLSIEHGNKKTYARTASEFGYLPLEHTLAVAEAVVTTQRDWGNRTDRKNAKTKYTLERVGLETFKAEVERRAGIKFEPIRPYEFTGRGDRIGWVKGIDDKWHLTLFIENGRILDYPGRPLKTGLLEIAKIHQGEFRITANQNLIIASVPESQKAKIETLARDHGLMNAVKPQRENSMACVSFPTCPLAMAEAERFLPSFTDKVEAILEKHGIPDEHIVMRVTGCPNGCGRAMLAEIGLVGKAPGRYNLHLGGNRIGSRIPRMYKENIAEPDILASLDELIGRWAKEREAGEGFGDFTVRAGIIRPVLDPARDFWE.

C434, C440, C479, and C483 together coordinate [4Fe-4S] cluster. Siroheme is bound at residue C483.

The protein belongs to the nitrite and sulfite reductase 4Fe-4S domain family. In terms of assembly, alpha(8)-beta(8). The alpha component is a flavoprotein, the beta component is a hemoprotein. Siroheme is required as a cofactor. Requires [4Fe-4S] cluster as cofactor.

It catalyses the reaction hydrogen sulfide + 3 NADP(+) + 3 H2O = sulfite + 3 NADPH + 4 H(+). It participates in sulfur metabolism; hydrogen sulfide biosynthesis; hydrogen sulfide from sulfite (NADPH route): step 1/1. Functionally, component of the sulfite reductase complex that catalyzes the 6-electron reduction of sulfite to sulfide. This is one of several activities required for the biosynthesis of L-cysteine from sulfate. In Salmonella typhimurium (strain LT2 / SGSC1412 / ATCC 700720), this protein is Sulfite reductase [NADPH] hemoprotein beta-component (cysI).